The sequence spans 146 residues: Probable NADH dehydrogenase [ubiquinone] 1 alpha subcomplex subunit 12 (146 aa).

This sequence belongs to the complex I NDUFA12 subunit family. Complex I is composed of 45 different subunits.

The protein resides in the mitochondrion inner membrane. In terms of biological role, accessory subunit of the mitochondrial membrane respiratory chain NADH dehydrogenase (Complex I), that is believed not to be involved in catalysis. Complex I functions in the transfer of electrons from NADH to the respiratory chain. The immediate electron acceptor for the enzyme is believed to be ubiquinone. The protein is Probable NADH dehydrogenase [ubiquinone] 1 alpha subcomplex subunit 12 of Caenorhabditis elegans.